Here is a 272-residue protein sequence, read N- to C-terminus: Putative bark agglutinin LECRPA3 (272 aa).

A signal peptide spans 1–29; the sequence is PFNPETVYALLAMLISFFVLLASARKENS. Residues Asn36, Asn39, and Asn65 are each glycosylated (N-linked (GlcNAc...) asparagine). Positions 150 and 152 each coordinate Mn(2+). Residues Asp152, Tyr154, Asn156, and Asp159 each contribute to the Ca(2+) site. Positions 159 and 164 each coordinate Mn(2+).

This sequence belongs to the leguminous lectin family. Homotetramer. As to expression, weak expression in bark. The lectin accumulates in the inner bark in autumn.

In terms of biological role, bark lectins are storage proteins that probably maintain stocks of nitrogen during dormant period. Self-aggregatable molecules that can bind their own carbohydrate side chains. They could also play a role in the plant's defense against phytophagous invertebrates or herbivorous higher animals. This Robinia pseudoacacia (Black locust) protein is Putative bark agglutinin LECRPA3.